Reading from the N-terminus, the 421-residue chain is Type II methyltransferase M.TaqI (421 aa).

The segment covering 1-18 (MGLPPLLSLPSNSAPRSL) has biased composition (low complexity). The segment at 1-20 (MGLPPLLSLPSNSAPRSLGR) is disordered. Residues Thr23, 45–48 (EPAC), Glu71, Asp89, and Pro107 each bind S-adenosyl-L-methionine.

It belongs to the N(4)/N(6)-methyltransferase family.

It catalyses the reaction a 2'-deoxyadenosine in DNA + S-adenosyl-L-methionine = an N(6)-methyl-2'-deoxyadenosine in DNA + S-adenosyl-L-homocysteine + H(+). Functionally, a gamma subtype methylase that recognizes the double-stranded sequence 5'-TCGA-3', methylates A-4 on both strands and protects the DNA from cleavage by the TaqI endonuclease. The polypeptide is Type II methyltransferase M.TaqI (taqIM) (Thermus aquaticus).